Consider the following 317-residue polypeptide: (2S)-3-sulfopropanediol dehydratase activating enzyme (317 aa).

The Radical SAM core domain occupies 18–306 (HDGPGLRTEL…QMLAEYFNQR (289 aa)). Residues C32, C36, C39, C58, C64, C67, C71, C92, C95, C98, and C102 each contribute to the [4Fe-4S] cluster site. Residue 38 to 40 (WCS) coordinates S-adenosyl-L-methionine. 2 4Fe-4S ferredoxin-type domains span residues 49 to 82 (AQVG…FTRG) and 83 to 112 (KLTS…LWGK). S-adenosyl-L-methionine-binding positions include G142 and 191-193 (DIK).

Belongs to the organic radical-activating enzymes family. [4Fe-4S] cluster serves as cofactor.

It carries out the reaction glycyl-[protein] + reduced [flavodoxin] + S-adenosyl-L-methionine = glycin-2-yl radical-[protein] + semiquinone [flavodoxin] + 5'-deoxyadenosine + L-methionine + H(+). It functions in the pathway organosulfur degradation; alkanesulfonate degradation. Its function is as follows. Involved in the degradation of the organosulfur compound 2(S)-dihydroxypropanesulfonate (DHPS). Catalyzes activation of the (2S)-3-sulfopropanediol dehydratase HpfG under anaerobic conditions by generation of an organic free radical on a glycine residue. This Klebsiella oxytoca protein is (2S)-3-sulfopropanediol dehydratase activating enzyme.